A 466-amino-acid polypeptide reads, in one-letter code: Cysteine--tRNA ligase (466 aa).

Position 29 (C29) interacts with Zn(2+). A 'HIGH' region motif is present at residues 31-41; it reads ATVQAAPHIGH. The Zn(2+) site is built by C208, H233, and E237. Residues 264–268 carry the 'KMSKS' region motif; sequence KMSKS. K267 contributes to the ATP binding site.

Belongs to the class-I aminoacyl-tRNA synthetase family. As to quaternary structure, monomer. The cofactor is Zn(2+).

Its subcellular location is the cytoplasm. The enzyme catalyses tRNA(Cys) + L-cysteine + ATP = L-cysteinyl-tRNA(Cys) + AMP + diphosphate. The protein is Cysteine--tRNA ligase of Streptomyces avermitilis (strain ATCC 31267 / DSM 46492 / JCM 5070 / NBRC 14893 / NCIMB 12804 / NRRL 8165 / MA-4680).